The following is an 86-amino-acid chain: Insulin (86 aa).

3 disulfide bridges follow: C7/C72, C19/C85, and C71/C76. A propeptide spans 33-63 (ELEDPQVGQADPGVVPEAGRLQPLALEMTLQ) (c peptide).

It belongs to the insulin family. Heterodimer of a B chain and an A chain linked by two disulfide bonds.

It localises to the secreted. In terms of biological role, insulin decreases blood glucose concentration. It increases cell permeability to monosaccharides, amino acids and fatty acids. It accelerates glycolysis, the pentose phosphate cycle, and glycogen synthesis in liver. This Chinchilla chinchilla (Short-tailed chinchilla) protein is Insulin (INS).